The chain runs to 404 residues: Formate-dependent phosphoribosylglycinamide formyltransferase (404 aa).

Residues 25–26 and glutamate 85 contribute to the N(1)-(5-phospho-beta-D-ribosyl)glycinamide site; that span reads EL. ATP-binding positions include arginine 118, lysine 159, 164 to 169, 199 to 202, and glutamate 207; these read SSGKGQ and EGFI. The 196-residue stretch at 123 to 318 folds into the ATP-grasp domain; that stretch reads RLAAEELGLP…EFELHARAIL (196 aa). The Mg(2+) site is built by glutamate 277 and glutamate 289. Residues aspartate 296, lysine 365, and 372–373 contribute to the N(1)-(5-phospho-beta-D-ribosyl)glycinamide site; that span reads RR. Residues 384 to 404 are disordered; sequence TDEARSRAKQAAAAVRPVSAK. Low complexity predominate over residues 392-404; sequence KQAAAAVRPVSAK.

It belongs to the PurK/PurT family. In terms of assembly, homodimer.

It catalyses the reaction N(1)-(5-phospho-beta-D-ribosyl)glycinamide + formate + ATP = N(2)-formyl-N(1)-(5-phospho-beta-D-ribosyl)glycinamide + ADP + phosphate + H(+). The protein operates within purine metabolism; IMP biosynthesis via de novo pathway; N(2)-formyl-N(1)-(5-phospho-D-ribosyl)glycinamide from N(1)-(5-phospho-D-ribosyl)glycinamide (formate route): step 1/1. Involved in the de novo purine biosynthesis. Catalyzes the transfer of formate to 5-phospho-ribosyl-glycinamide (GAR), producing 5-phospho-ribosyl-N-formylglycinamide (FGAR). Formate is provided by PurU via hydrolysis of 10-formyl-tetrahydrofolate. The protein is Formate-dependent phosphoribosylglycinamide formyltransferase of Paraburkholderia xenovorans (strain LB400).